The following is a 193-amino-acid chain: Resuscitation-promoting factor Rpf1 (193 aa).

The N-terminal stretch at 1 to 35 (MGRHSTKTSSAFTKLAASTIAFGAAATIMAPSASA) is a signal peptide.

The protein belongs to the transglycosylase family. Rpf subfamily.

It localises to the secreted. In terms of biological role, factor that stimulates resuscitation of dormant cells. Has peptidoglycan (PG) hydrolytic activity. Active in the pM concentration range. Has little to no effect on actively-growing cells. PG fragments could either directly activate the resuscitation pathway of dormant bacteria or serve as a substrate for endogenous Rpf, resulting in low molecular weight products with resuscitation activity. The protein is Resuscitation-promoting factor Rpf1 (rpf1) of Corynebacterium glutamicum (strain ATCC 13032 / DSM 20300 / JCM 1318 / BCRC 11384 / CCUG 27702 / LMG 3730 / NBRC 12168 / NCIMB 10025 / NRRL B-2784 / 534).